A 432-amino-acid polypeptide reads, in one-letter code: Glutamate-1-semialdehyde 2,1-aminomutase (432 aa).

K271 carries the post-translational modification N6-(pyridoxal phosphate)lysine.

This sequence belongs to the class-III pyridoxal-phosphate-dependent aminotransferase family. HemL subfamily. Homodimer. The cofactor is pyridoxal 5'-phosphate.

The protein resides in the cytoplasm. It catalyses the reaction (S)-4-amino-5-oxopentanoate = 5-aminolevulinate. The protein operates within porphyrin-containing compound metabolism; protoporphyrin-IX biosynthesis; 5-aminolevulinate from L-glutamyl-tRNA(Glu): step 2/2. Its pathway is porphyrin-containing compound metabolism; chlorophyll biosynthesis. The protein is Glutamate-1-semialdehyde 2,1-aminomutase of Prochlorococcus marinus (strain NATL2A).